Here is a 240-residue protein sequence, read N- to C-terminus: GATA transcription factor 4 (240 aa).

The interval 104 to 124 (ISFTGKPRSRRSRAPAPSVAG) is disordered. The Nuclear localization signal motif lies at 109–116 (KPRSRRSR). Residues 154 to 208 (ADGARRCTHCASEKTPQWRTGPLGPKTLCNACGVRYKSGRLVPEYRPASSPTFVL) form a GATA-type zinc finger.

Belongs to the type IV zinc-finger family. Class A subfamily. As to expression, expressed in roots, flowers and leaves, and to a lower extent in stems.

The protein localises to the nucleus. Its function is as follows. Transcriptional activator that specifically binds 5'-GATA-3' or 5'-GAT-3' motifs within gene promoters. May be involved in the regulation of some light-responsive genes. In Arabidopsis thaliana (Mouse-ear cress), this protein is GATA transcription factor 4 (GATA4).